Consider the following 79-residue polypeptide: MSLTVKCPTCQTPVTWNAEAEFKPFCSERCKLIDLGDWASEKNAIPVKPEFAPELLDQLGYDDADFFLDNNPFEDDKNR.

Zn(2+) contacts are provided by C7, C10, C26, and C30.

This sequence belongs to the DNA gyrase inhibitor YacG family. In terms of assembly, interacts with GyrB. It depends on Zn(2+) as a cofactor.

Its function is as follows. Inhibits all the catalytic activities of DNA gyrase by preventing its interaction with DNA. Acts by binding directly to the C-terminal domain of GyrB, which probably disrupts DNA binding by the gyrase. The protein is DNA gyrase inhibitor YacG of Shewanella pealeana (strain ATCC 700345 / ANG-SQ1).